A 450-amino-acid polypeptide reads, in one-letter code: Neutral protease 2 homolog AFUB_070680 (450 aa).

The N-terminal stretch at 1-19 (MKITALASAILAVAQGALA) is a signal peptide. Positions 20 to 172 (LPARAPALDI…PASIKPLDRR (153 aa)) are excised as a propeptide. 2 disulfide bridges follow: cysteine 179/cysteine 251 and cysteine 258/cysteine 276. Histidine 300 lines the Zn(2+) pocket. Glutamate 301 is an active-site residue. The Zn(2+) site is built by histidine 304 and aspartate 315. A compositionally biased stretch (polar residues) spans 364-392 (QPGQTEPGTQTMWDGYSQPGQTEPGTQTM). The tract at residues 364–416 (QPGQTEPGTQTMWDGYSQPGQTEPGTQTMWDGYSQPGQTEPGTQTTWDGYSQP) is disordered. A compositionally biased stretch (low complexity) spans 398 to 409 (QPGQTEPGTQTT).

It belongs to the peptidase M35 family. Zn(2+) serves as cofactor.

The protein resides in the secreted. The catalysed reaction is Preferential cleavage of bonds with hydrophobic residues in P1'. Also 3-Asn-|-Gln-4 and 8-Gly-|-Ser-9 bonds in insulin B chain.. Functionally, secreted metalloproteinase that allows assimilation of proteinaceous substrates. Shows high activities on basic nuclear substrates such as histone and protamine. May be involved in virulence. The polypeptide is Neutral protease 2 homolog AFUB_070680 (Aspergillus fumigatus (strain ATCC MYA-4609 / CBS 101355 / FGSC A1100 / Af293) (Neosartorya fumigata)).